Here is a 189-residue protein sequence, read N- to C-terminus: Elongation factor P (189 aa).

It belongs to the elongation factor P family.

It is found in the cytoplasm. It functions in the pathway protein biosynthesis; polypeptide chain elongation. Functionally, involved in peptide bond synthesis. Stimulates efficient translation and peptide-bond synthesis on native or reconstituted 70S ribosomes in vitro. Probably functions indirectly by altering the affinity of the ribosome for aminoacyl-tRNA, thus increasing their reactivity as acceptors for peptidyl transferase. This is Elongation factor P from Pseudomonas putida (strain ATCC 700007 / DSM 6899 / JCM 31910 / BCRC 17059 / LMG 24140 / F1).